Here is an 86-residue protein sequence, read N- to C-terminus: Bradykinin-potentiating peptide 25.12 (86 aa).

The first 22 residues, methionine 1–serine 22, serve as a signal peptide directing secretion. A disordered region spans residues alanine 67–arginine 86.

The protein belongs to the non-disulfide-bridged peptide (NDBP) superfamily. Long chain multifunctional peptide (group 2) family. As to expression, expressed by the venom gland.

It is found in the secreted. In terms of biological role, inhibits angiotensin-converting enzyme (ACE), but does not serve as substrate for the enzyme. Potentiates bradykinin (BK) on the isolated guinea pig ileum as well as the isolated rat uterus for contraction. Also potentiates in vivo the depressor effect of BK on arterial blood pressure in the normotensive anesthetized rat. This Lychas mucronatus (Chinese swimming scorpion) protein is Bradykinin-potentiating peptide 25.12.